Consider the following 215-residue polypeptide: Methylthioribulose-1-phosphate dehydratase (215 aa).

2 residues coordinate Zn(2+): histidine 103 and histidine 105.

It belongs to the aldolase class II family. MtnB subfamily. Requires Zn(2+) as cofactor.

It catalyses the reaction 5-(methylsulfanyl)-D-ribulose 1-phosphate = 5-methylsulfanyl-2,3-dioxopentyl phosphate + H2O. Its pathway is amino-acid biosynthesis; L-methionine biosynthesis via salvage pathway; L-methionine from S-methyl-5-thio-alpha-D-ribose 1-phosphate: step 2/6. Functionally, catalyzes the dehydration of methylthioribulose-1-phosphate (MTRu-1-P) into 2,3-diketo-5-methylthiopentyl-1-phosphate (DK-MTP-1-P). In Sulfurihydrogenibium sp. (strain YO3AOP1), this protein is Methylthioribulose-1-phosphate dehydratase.